The sequence spans 288 residues: Polyamine aminopropyltransferase (288 aa).

The PABS domain maps to 11 to 245 (IEWYPRGYGV…SPWSFLVGVK (235 aa)). An S-methyl-5'-thioadenosine-binding site is contributed by Gln-36. Residues His-67 and Asp-91 each coordinate spermidine. S-methyl-5'-thioadenosine-binding positions include Glu-111 and 148 to 149 (DG). Asp-166 acts as the Proton acceptor in catalysis. 166–169 (DSTD) contributes to the spermidine binding site. Residue Pro-173 coordinates S-methyl-5'-thioadenosine.

Belongs to the spermidine/spermine synthase family. Homodimer or homotetramer.

The protein resides in the cytoplasm. It catalyses the reaction S-adenosyl 3-(methylsulfanyl)propylamine + agmatine = N(1)-(3-aminopropyl)agmatine + S-methyl-5'-thioadenosine + H(+). The enzyme catalyses S-adenosyl 3-(methylsulfanyl)propylamine + putrescine = S-methyl-5'-thioadenosine + spermidine + H(+). It carries out the reaction cadaverine + S-adenosyl 3-(methylsulfanyl)propylamine = aminopropylcadaverine + S-methyl-5'-thioadenosine + H(+). The protein operates within amine and polyamine biosynthesis; spermidine biosynthesis; spermidine from putrescine: step 1/1. In terms of biological role, involved in the biosynthesis of polyamines which are thought to support the growth of thermophilic microorganisms under high-temperature conditions. It seems that long-chain and branched-chain of polyamines effectively stabilize DNA and RNA, respectively. Catalyzes the irreversible transfer of a propylamine group from the amino donor S-adenosylmethioninamine (decarboxy-AdoMet) to agmatine to yield N1-aminopropylagmatine. It can also use cadaverine (1,5-diaminopentane) and putrescine (1,4-diaminobutane) as substrate with a lower activity than that of agmatine. The reaction involves a nucleophilic attack on the C-3 methylene of the propylamine moiety adjacent to the positively charged sulfur of decarboxy-AdoMet. The sequence is that of Polyamine aminopropyltransferase from Thermococcus kodakarensis (strain ATCC BAA-918 / JCM 12380 / KOD1) (Pyrococcus kodakaraensis (strain KOD1)).